The chain runs to 504 residues: MSVIRADEVLESLNKQIEEFQVSANLEEVGTVIQVGDGVARIYGLEKAMMGEMLEFESGIVGVVFNLEEDNVGAVLLGSDVAVREGSIVKRTGKILSVPVGKGLLGRVVDGLGNPIDGKGPLTDIAYYSPVEKIAPGVVKRKSVHEPLQTGIKAIDAMIPIGRGQRELIIGDRATGKTTIAIDTILNQKGQGVYCIYVAIGQKRANVVHIVETLQKHGAMEYTTVVAATSSDPATMQYIAPFVGCTIGEYFRDNGMHALVIYDDLTKHAYAYRQLSLLLRRPPGREAYPGDVFYLHSRLLERAAKLNDELGAGSLTALPIIETQAGDVAAYIPTNVISITDGQIFLEADLFYKGIRPAINAGISVSRVGGAAQIKAMKQVAGTLRLDLAQYRELEAFVQFASELDKATQAQIARGQRMVELLKQPPNQPVPVEKQVAIIYVAGQGYLDDVSVNAIQKFEKEFYVFLDTEKPDILEAIRREKALTDDIKAKLDAAVKEFKQKVAF.

171-178 (GDRATGKT) contributes to the ATP binding site.

Belongs to the ATPase alpha/beta chains family. As to quaternary structure, F-type ATPases have 2 components, CF(1) - the catalytic core - and CF(0) - the membrane proton channel. CF(1) has five subunits: alpha(3), beta(3), gamma(1), delta(1), epsilon(1). CF(0) has three main subunits: a(1), b(2) and c(9-12). The alpha and beta chains form an alternating ring which encloses part of the gamma chain. CF(1) is attached to CF(0) by a central stalk formed by the gamma and epsilon chains, while a peripheral stalk is formed by the delta and b chains.

It is found in the cell inner membrane. It carries out the reaction ATP + H2O + 4 H(+)(in) = ADP + phosphate + 5 H(+)(out). Produces ATP from ADP in the presence of a proton gradient across the membrane. The alpha chain is a regulatory subunit. The sequence is that of ATP synthase subunit alpha from Sulfurihydrogenibium sp. (strain YO3AOP1).